The primary structure comprises 997 residues: MADSGDKSQGMRPPPFDSRGHPLPRRASPDKSITLHNHRLARDASSRVISSSALGVTGPQPQPTSSPTRRDSSGESNDTGQSDPKSWFDQSNRNPVAAFNDESNIMEVDPPFYQKETDSSNEDSRYPPGRNPSYPPRDTQTQGFRATVAHSSSADDFRSVIDDLTVENKRLKEELKRYKQFGSDMMRKEKLFEIKVHGLPRRKKRELEATLREFAASLGDSSESTSQRRKAGRHGKAVHSSGVSLSKHDSSSSSRSRPVDSAYASMSTGRSSHAAHSSGPSLGRPSLSSKSTSSQKVESYLRDTPDGLLPHHVVMTDKEKKKLVVRRLEQLFTGKISGRNMQRIPSIPSMDAALVSEGTIMAPPRPPPEGSREACIQLQEGENPEKIRSSKGATSASNSGGDQTEVGGTVTAGGDGNGSGGRTVNNTSPPGVIAPDQRPTRPRDLDPDRVQIPSENMDYIRHLGLVSPEFLQGSRTSYQDVAPDAEGWVYLNLLCNLAQLHMINVTPSFIRQAVSEKSTKFQLSSDGRKIRWRGGTDGTKFSSDNGEDKSQKSPLTDDTEDGSDKTGRRKKQKTQQARSEIGRLGLSRSPSDTFHYKPMFVHCHASSAETSLEESASQGSEDFVDESNLANSKWDFSGSGTTQQRRKRRYDGAIVYYTGAQFCTDLSGEPGDMSPTEQMTATGEQEASGSGDEAGRVLQRTLSGSSLLVRPLSDDRARVAEALDFDPQNPPDLVSDDGFSPNDEDFVFPWCEDPAKTQVQPLAKEVMGRSGLGGVLPDDHFAIFVTTRRVMRPTLQRHLSRSTTSEDTAEIIAERLASIRTSSPLPPPRSRNLILAPLQIEYVAGEFHRLNPASLPPPAMFYPPFSTDSSWDDGDDLVSVEEEVEEMEEESFSEGQMSRRANPHFSDNNTYMRKEDLAFDTETDVRMDSSHDHRMSSDSGLMMRSVMRRPVAVDGDGSPLATVTGRDVDMLHTSSSVATAGGAESGYSSSMEDVSSS.

7 disordered regions span residues 1-153 (MADS…HSSS), 214-311 (FAAS…LLPH), 381-447 (GENP…DLDP), 524-590 (SSDG…SRSP), 665-694 (DLSG…GDEA), 889-908 (EESF…FSDN), and 975-997 (SSVA…VSSS). Residues 74-94 (GESNDTGQSDPKSWFDQSNRN) show a composition bias toward polar residues. The segment covering 115–125 (KETDSSNEDSR) has biased composition (basic and acidic residues). A compositionally biased stretch (polar residues) spans 138-152 (DTQTQGFRATVAHSS). The segment covering 227 to 237 (QRRKAGRHGKA) has biased composition (basic residues). Residues 239 to 261 (HSSGVSLSKHDSSSSSRSRPVDS) are compositionally biased toward low complexity. The segment covering 264-275 (ASMSTGRSSHAA) has biased composition (polar residues). Over residues 277–294 (SSGPSLGRPSLSSKSTSS) the composition is skewed to low complexity. The span at 391-402 (KGATSASNSGGD) shows a compositional bias: polar residues. Gly residues predominate over residues 410 to 421 (VTAGGDGNGSGG). The span at 438-447 (RPTRPRDLDP) shows a compositional bias: basic and acidic residues. A Nuclear localization signal motif is present at residues 569–573 (RKKQK). Residues 675-688 (PTEQMTATGEQEAS) show a composition bias toward polar residues. Residues 986-997 (GYSSSMEDVSSS) show a composition bias toward polar residues.

Belongs to the FRQ family.

The protein localises to the nucleus. In terms of biological role, circadian clock component involved in the generation of biological rhythms, in particular in rhythm stability, period length, and temperature compensation. Behaves as a negative element in circadian transcriptional loop. The chain is Frequency clock protein (FRQ) from Sordaria fimicola.